The chain runs to 1314 residues: Tetratricopeptide repeat protein 21A (1314 aa).

TPR repeat units follow at residues 110-143 (STAL…SSGS), 214-247 (LPAL…DENN), 326-359 (ALVA…EENR), 494-527 (MEPL…DPTF), 529-561 (DAHL…NFQV), 565-598 (PLYH…PTSK), 616-649 (ASIL…FSGT), 721-754 (PHSS…NPHD), 755-788 (ASLV…SGQD), 790-821 (LCCE…DSGV), 831-863 (VKCL…QSRI), 883-916 (ASIC…SPTD), 918-950 (KVVL…EQTH), 951-984 (ERAA…APDN), 986-1018 (LVLN…SSRV), 1022-1055 (PGFN…STWG), 1195-1228 (EKSW…NKSC), 1230-1262 (RAYE…SHQA), and 1264-1297 (PAIG…HPKY).

This sequence belongs to the TTC21 family. As to quaternary structure, interacts with IFT20. Interacts with IFT52. Interacts with IFT140. Interacts with CEP78; regulating IFT20 stability and localization.

Functionally, intraflagellar transport (IFT)-associated protein required for spermatogenesis. Required for sperm flagellar formation and intraflagellar transport. This is Tetratricopeptide repeat protein 21A (Ttc21a) from Mus musculus (Mouse).